The following is a 549-amino-acid chain: Glucose-6-phosphate isomerase (549 aa).

The Proton donor role is filled by glutamate 355. Residues histidine 387 and lysine 515 contribute to the active site.

Belongs to the GPI family.

It is found in the cytoplasm. The enzyme catalyses alpha-D-glucose 6-phosphate = beta-D-fructose 6-phosphate. It participates in carbohydrate biosynthesis; gluconeogenesis. The protein operates within carbohydrate degradation; glycolysis; D-glyceraldehyde 3-phosphate and glycerone phosphate from D-glucose: step 2/4. Functionally, catalyzes the reversible isomerization of glucose-6-phosphate to fructose-6-phosphate. This chain is Glucose-6-phosphate isomerase, found in Haemophilus influenzae (strain 86-028NP).